We begin with the raw amino-acid sequence, 429 residues long: Histidine--tRNA ligase (429 aa).

This sequence belongs to the class-II aminoacyl-tRNA synthetase family. Homodimer.

Its subcellular location is the cytoplasm. The enzyme catalyses tRNA(His) + L-histidine + ATP = L-histidyl-tRNA(His) + AMP + diphosphate + H(+). The polypeptide is Histidine--tRNA ligase (Streptococcus pneumoniae (strain P1031)).